Reading from the N-terminus, the 103-residue chain is Cytochrome c55X (103 aa).

The signal sequence occupies residues 1–17 (MARLALLLVLLAGTAVA). Heme c contacts are provided by cysteine 36, cysteine 39, and histidine 40.

Post-translationally, binds 1 heme c group covalently per subunit.

It is found in the periplasm. Monoheme c-type cytochrome. The sequence is that of Cytochrome c55X (nirC) from Paracoccus denitrificans (strain Pd 1222).